Consider the following 393-residue polypeptide: Fasciculation and elongation protein zeta-1 (393 aa).

A disordered region spans residues 1-41; that stretch reads MEAPLVSLDEEFEDIRPCCTEDPEEKPQSLYGTSPHHLEDP. Serine 58 carries the phosphoserine modification. Positions 130–154 are disordered; that stretch reads NGNSSDTEIHEKEEEDEFIEKSEND. Positions 231 to 299 form a coiled coil; it reads SELTELLDQV…KKRRKEKGLS (69 aa). A phosphoserine mark is found at serine 299 and serine 317.

It belongs to the zygin family. As to quaternary structure, homodimer. Interacts with UBE4B and SAP30L. Interacts with SCOC and ULK1; SCOC interferes with ULK1-binding to FEZ1. Directly interacts with SCOC and UVRAG. Stabilizes the interaction between SCOC and UVRAG during amino acid starvation. Interacts with the NH2-terminal variable region (V1) of PKC zeta and weakly with that of PKC epsilon. Phosphorylated by protein kinase C zeta; which enhances interaction with UBE4B and polyubiquitination. Post-translationally, polyubiquitinated in a UBE4B-dependent manner; which does not lead to proteasomal degradation and may be important for neurogenic activity. Polyubiquitin linkage seems to be mainly through Lys-26. As to expression, brain.

The protein localises to the cytoplasm. It is found in the cytoskeleton. Its subcellular location is the microtubule organizing center. It localises to the centrosome. The protein resides in the cell membrane. In terms of biological role, may be involved in axonal outgrowth as component of the network of molecules that regulate cellular morphology and axon guidance machinery. May participate in the transport of mitochondria and other cargos along microtubules. This is Fasciculation and elongation protein zeta-1 (Fez1) from Rattus norvegicus (Rat).